The primary structure comprises 234 residues: Large ribosomal subunit protein uL1 (234 aa).

It belongs to the universal ribosomal protein uL1 family. Part of the 50S ribosomal subunit.

In terms of biological role, binds directly to 23S rRNA. The L1 stalk is quite mobile in the ribosome, and is involved in E site tRNA release. Functionally, protein L1 is also a translational repressor protein, it controls the translation of the L11 operon by binding to its mRNA. This is Large ribosomal subunit protein uL1 from Klebsiella pneumoniae subsp. pneumoniae (strain ATCC 700721 / MGH 78578).